The chain runs to 115 residues: Probable 4-amino-4-deoxy-L-arabinose-phosphoundecaprenol flippase subunit ArnE (115 aa).

The next 3 membrane-spanning stretches (helical) occupy residues 42–62 (PWPW…LLLL), 65–85 (VEVG…TLVA), and 93–112 (VDRR…ALLG). In terms of domain architecture, EamA spans 46–113 (LALLALGLGL…IVAGVALLGR (68 aa)).

This sequence belongs to the ArnE family. In terms of assembly, heterodimer of ArnE and ArnF.

The protein resides in the cell inner membrane. Its pathway is bacterial outer membrane biogenesis; lipopolysaccharide biosynthesis. In terms of biological role, translocates 4-amino-4-deoxy-L-arabinose-phosphoundecaprenol (alpha-L-Ara4N-phosphoundecaprenol) from the cytoplasmic to the periplasmic side of the inner membrane. This Pseudomonas paraeruginosa (strain DSM 24068 / PA7) (Pseudomonas aeruginosa (strain PA7)) protein is Probable 4-amino-4-deoxy-L-arabinose-phosphoundecaprenol flippase subunit ArnE.